The sequence spans 122 residues: Large ribosomal subunit protein uL18 (122 aa).

This sequence belongs to the universal ribosomal protein uL18 family. Part of the 50S ribosomal subunit; part of the 5S rRNA/L5/L18/L25 subcomplex. Contacts the 5S and 23S rRNAs.

In terms of biological role, this is one of the proteins that bind and probably mediate the attachment of the 5S RNA into the large ribosomal subunit, where it forms part of the central protuberance. This Geotalea uraniireducens (strain Rf4) (Geobacter uraniireducens) protein is Large ribosomal subunit protein uL18.